The primary structure comprises 904 residues: Pentatricopeptide repeat-containing protein At4g30825, chloroplastic (904 aa).

Residues 1–61 (MGSLRFSIPL…SSTRVLDKIR (61 aa)) constitute a chloroplast transit peptide. Positions 75 to 94 (NSASAAPVERSRSSKLSGDQ) are disordered. PPR repeat units lie at residues 173–203 (NFVA…LCGF), 209–243 (SYQV…GVRP), 244–274 (NVAT…MRKF), 278–312 (CESA…RVRL), 313–347 (KLEN…GFSP), 348–382 (NIIA…GLEP), 383–417 (DETS…GYKP), 418–452 (NSFN…GCQY), 487–521 (NQTS…DSAF), 522–553 (ESHL…MESD), 557–591 (NLHI…GVVL), 592–622 (DRIG…MDEQ), 628–662 (DVYL…GIHW), 663–697 (NQEM…GFTP), 698–732 (NTVT…GVVD), 733–766 (VISY…GFSV), 767–801 (SLEA…TSGP), 802–836 (DHYT…GLGP), 837–871 (DLCS…NIIP), and 872–904 (DKVT…QMGI).

It belongs to the PPR family. P subfamily.

Its subcellular location is the plastid. It is found in the chloroplast. In Arabidopsis thaliana (Mouse-ear cress), this protein is Pentatricopeptide repeat-containing protein At4g30825, chloroplastic.